A 284-amino-acid chain; its full sequence is Polyamine aminopropyltransferase (284 aa).

The PABS domain occupies 2-237; it reads ELWYTEQHTE…GHWLFGFASK (236 aa). Residue glutamine 31 participates in S-methyl-5'-thioadenosine binding. Positions 62 and 86 each coordinate spermidine. S-methyl-5'-thioadenosine contacts are provided by residues glutamate 106 and 137–138; that span reads DG. Aspartate 155 functions as the Proton acceptor in the catalytic mechanism. A spermidine-binding site is contributed by 155 to 158; that stretch reads DSTD. An S-methyl-5'-thioadenosine-binding site is contributed by proline 162.

The protein belongs to the spermidine/spermine synthase family. As to quaternary structure, homodimer or homotetramer.

It is found in the cytoplasm. It carries out the reaction S-adenosyl 3-(methylsulfanyl)propylamine + putrescine = S-methyl-5'-thioadenosine + spermidine + H(+). It functions in the pathway amine and polyamine biosynthesis; spermidine biosynthesis; spermidine from putrescine: step 1/1. Functionally, catalyzes the irreversible transfer of a propylamine group from the amino donor S-adenosylmethioninamine (decarboxy-AdoMet) to putrescine (1,4-diaminobutane) to yield spermidine. This chain is Polyamine aminopropyltransferase, found in Clostridium beijerinckii (strain ATCC 51743 / NCIMB 8052) (Clostridium acetobutylicum).